The sequence spans 295 residues: Ectoine dioxygenase (295 aa).

An L-ectoine-binding site is contributed by Q129. Residue K135 participates in 2-oxoglutarate binding. Positions 146, 148, and 247 each coordinate Fe cation.

Belongs to the PhyH family. EctD subfamily. In terms of assembly, homodimer. The cofactor is Fe(2+).

The enzyme catalyses L-ectoine + 2-oxoglutarate + O2 = 5-hydroxyectoine + succinate + CO2. Involved in the biosynthesis of 5-hydroxyectoine, called compatible solute, which helps organisms to survive extreme osmotic stress by acting as a highly soluble organic osmolyte. Catalyzes the 2-oxoglutarate-dependent selective hydroxylation of L-ectoine to yield (4S,5S)-5-hydroxyectoine. The sequence is that of Ectoine dioxygenase from Streptomyces avermitilis (strain ATCC 31267 / DSM 46492 / JCM 5070 / NBRC 14893 / NCIMB 12804 / NRRL 8165 / MA-4680).